A 330-amino-acid polypeptide reads, in one-letter code: tRNA dimethylallyltransferase (330 aa).

A compositionally biased stretch (polar residues) spans 1–11 (MDYSHSDSPST). Residues 1–21 (MDYSHSDSPSTAPAGKTPVDQ) form a disordered region. Residue 29-36 (GPTGAGKS) participates in ATP binding. A substrate-binding site is contributed by 31-36 (TGAGKS). An interaction with substrate tRNA region spans residues 56-59 (DSMQ).

Belongs to the IPP transferase family. Monomer. Mg(2+) is required as a cofactor.

It catalyses the reaction adenosine(37) in tRNA + dimethylallyl diphosphate = N(6)-dimethylallyladenosine(37) in tRNA + diphosphate. In terms of biological role, catalyzes the transfer of a dimethylallyl group onto the adenine at position 37 in tRNAs that read codons beginning with uridine, leading to the formation of N6-(dimethylallyl)adenosine (i(6)A). This Corynebacterium urealyticum (strain ATCC 43042 / DSM 7109) protein is tRNA dimethylallyltransferase.